A 33-amino-acid chain; its full sequence is Photosystem II reaction center protein Psb30 (33 aa).

A helical membrane pass occupies residues 8–28 (QLGSLLLITVAGPLIVFFLFI).

This sequence belongs to the Psb30/Ycf12 family. In terms of assembly, PSII is composed of 1 copy each of membrane proteins PsbA, PsbB, PsbC, PsbD, PsbE, PsbF, PsbH, PsbI, PsbJ, PsbK, PsbL, PsbM, PsbT, PsbY, PsbZ, Psb30/Ycf12, peripheral proteins of the oxygen-evolving complex and a large number of cofactors. It forms dimeric complexes.

The protein resides in the plastid. Its subcellular location is the chloroplast thylakoid membrane. A core subunit of photosystem II (PSII), probably helps stabilize the reaction center. The polypeptide is Photosystem II reaction center protein Psb30 (Euglena anabaena (Euglenaria anabaena)).